Reading from the N-terminus, the 107-residue chain is Cell division protein FtsB (107 aa).

The Cytoplasmic portion of the chain corresponds to 1–3 (MGK). A helical membrane pass occupies residues 4-21 (LTLLLLILLGWLQYSLWL). The Periplasmic portion of the chain corresponds to 22-107 (GKNGVHDFVR…IPSTQNNAQQ (86 aa)). A coiled-coil region spans residues 39–62 (QEVNNGKLKARNDQLFAEIDDLNG).

Belongs to the FtsB family. In terms of assembly, part of a complex composed of FtsB, FtsL and FtsQ.

Its subcellular location is the cell inner membrane. In terms of biological role, essential cell division protein. May link together the upstream cell division proteins, which are predominantly cytoplasmic, with the downstream cell division proteins, which are predominantly periplasmic. In Yersinia enterocolitica serotype O:8 / biotype 1B (strain NCTC 13174 / 8081), this protein is Cell division protein FtsB.